A 308-amino-acid chain; its full sequence is E3 ubiquitin-protein ligase SINAT2 (308 aa).

The RING-type zinc finger occupies 60-96; sequence CPVCTNLMYPPIHQCPNGHTLCSNCKLRVQNTCPTCR. Residues 110 to 303 are SBD; it reads VAESLEVPCR…QELKLRVTGR (194 aa). The SIAH-type zinc-finger motif lies at 113 to 173; sequence SLEVPCRYQN…LVVHLKDDHK (61 aa). 8 residues coordinate Zn(2+): cysteine 118, cysteine 125, histidine 137, cysteine 141, cysteine 148, cysteine 155, histidine 167, and histidine 172.

It belongs to the SINA (Seven in absentia) family. Interacts with RAP2-2. Interacts with SINAT6. Interacts with ATG6 and TRAF1A. Interacts with WAV3. Interacts with FREE1. Interacts with ELC/VPS23A.

Its subcellular location is the endosome. The protein resides in the multivesicular body. It is found in the cytoplasmic vesicle. It localises to the autophagosome. The enzyme catalyses S-ubiquitinyl-[E2 ubiquitin-conjugating enzyme]-L-cysteine + [acceptor protein]-L-lysine = [E2 ubiquitin-conjugating enzyme]-L-cysteine + N(6)-ubiquitinyl-[acceptor protein]-L-lysine.. It participates in protein modification; protein ubiquitination. Functionally, E3 ubiquitin-protein ligase that mediates ubiquitination and subsequent proteasomal degradation of target proteins. E3 ubiquitin ligases accept ubiquitin from an E2 ubiquitin-conjugating enzyme in the form of a thioester and then directly transfers the ubiquitin to targeted substrates. It probably triggers the ubiquitin-mediated degradation of different substrates. Mediates the proteasomal-dependent degradation of ATG6, a component of the autophagosome complex. Requires TRAF1A/MUSE14 and TRAF1B/MUSE13 to target ATG6 for ubiquitination and subsequent regulation of autophagosome assembly. Modulates directly the ubiquitination and proteasomal-dependent degradation of FREE1, a component of the ESCRT-I complex. Modulates directly the ubiquitination and proteasomal-dependent degradation of ELC/VPS23A, a component of the ESCRT-I complex. This Arabidopsis thaliana (Mouse-ear cress) protein is E3 ubiquitin-protein ligase SINAT2.